The primary structure comprises 502 residues: Probable ADP-dependent glucokinase (502 aa).

The signal sequence occupies residues 1 to 32; the sequence is MFSETFVPSIFSYKHRLLHLSVLFFIVPYWYS. One can recognise an ADPK domain in the interval 44-497; it reads SVETAMFLSW…LLYSQFYRLN (454 aa). N89 and N190 each carry an N-linked (GlcNAc...) asparagine glycan. 3 residues coordinate Mg(2+): E290, E320, and D481. Residue D481 is the Proton acceptor of the active site.

It belongs to the ADP-dependent glucokinase family. Monomer. The cofactor is Mg(2+).

The protein resides in the secreted. The catalysed reaction is D-glucose + ADP = D-glucose 6-phosphate + AMP + H(+). It participates in carbohydrate degradation; glycolysis. Catalyzes the phosphorylation of D-glucose to D-glucose 6-phosphate using ADP as the phosphate donor. GDP and CDP can replace ADP, but with reduced efficiency. This Caenorhabditis elegans protein is Probable ADP-dependent glucokinase.